Here is a 510-residue protein sequence, read N- to C-terminus: ATP synthase subunit alpha (510 aa).

Residue Gly-169–Thr-176 participates in ATP binding.

It belongs to the ATPase alpha/beta chains family. F-type ATPases have 2 components, CF(1) - the catalytic core - and CF(0) - the membrane proton channel. CF(1) has five subunits: alpha(3), beta(3), gamma(1), delta(1), epsilon(1). CF(0) has three main subunits: a(1), b(2) and c(9-12). The alpha and beta chains form an alternating ring which encloses part of the gamma chain. CF(1) is attached to CF(0) by a central stalk formed by the gamma and epsilon chains, while a peripheral stalk is formed by the delta and b chains.

It is found in the cell inner membrane. The enzyme catalyses ATP + H2O + 4 H(+)(in) = ADP + phosphate + 5 H(+)(out). Produces ATP from ADP in the presence of a proton gradient across the membrane. The alpha chain is a regulatory subunit. The polypeptide is ATP synthase subunit alpha (Afipia carboxidovorans (strain ATCC 49405 / DSM 1227 / KCTC 32145 / OM5) (Oligotropha carboxidovorans)).